A 530-amino-acid polypeptide reads, in one-letter code: Alpha-(1,3)-fucosyltransferase 4 (530 aa).

Disordered stretches follow at residues 1 to 48 (MRRL…RAVP) and 66 to 113 (HLGG…TPAD). The Cytoplasmic segment spans residues 1–147 (MRRLWGAARK…GGRRRWRRGR (147 aa)). Basic and acidic residues predominate over residues 88 to 106 (ASGERQRRLEPQLQHESRC). The helical; Signal-anchor for type II membrane protein transmembrane segment at 148 to 172 (GLPWTVCVLAAAGLTCTALITYACW) threads the bilayer. The Lumenal segment spans residues 173 to 530 (GQLPPLPWAS…IRNLASWFER (358 aa)). N-linked (GlcNAc...) asparagine glycosylation is found at Asn216 and Asn315.

The protein belongs to the glycosyltransferase 10 family.

It is found in the golgi apparatus. It localises to the golgi stack membrane. It carries out the reaction a beta-D-galactosyl-(1-&gt;4)-N-acetyl-beta-D-glucosaminyl derivative + GDP-beta-L-fucose = a beta-D-galactosyl-(1-&gt;4)-[alpha-L-fucosyl-(1-&gt;3)]-N-acetyl-beta-D-glucosaminyl derivative + GDP + H(+). The catalysed reaction is an N-acetyl-alpha-neuraminyl-(2-&gt;3)-beta-D-galactosyl-(1-&gt;4)-N-acetyl-beta-D-glucosaminyl derivative + GDP-beta-L-fucose = an alpha-Neu5Ac-(2-&gt;3)-beta-D-Gal-(1-&gt;4)-[alpha-L-Fuc-(1-&gt;3)]-beta-D-GlcNAc derivative + GDP + H(+). It catalyses the reaction an alpha-Neu5Ac-(2-&gt;3)-beta-D-Gal-(1-&gt;4)-beta-D-GlcNAc-(1-&gt;3)-beta-D-Gal-(1-&gt;4)-beta-D-GlcNAc derivative + GDP-beta-L-fucose = an alpha-Neu5Ac-(2-&gt;3)-beta-D-Gal-(1-&gt;4)-beta-D-GlcNAc-(1-&gt;3)-beta-D-Gal-(1-&gt;4)-[alpha-L-Fuc-(1-&gt;3)]-beta-D-GlcNAc derivative + GDP + H(+). The enzyme catalyses an alpha-Neu5Ac-(2-&gt;3)-beta-D-Gal-(1-&gt;4)-beta-D-GlcNAc6S derivative + GDP-beta-L-fucose = an alpha-Neu5Ac-(2-&gt;3)-beta-D-Gal-(1-&gt;4)-[alpha-L-Fuc-(1-&gt;3)]-beta-D-GlcNAc6S derivative + GDP + H(+). Its pathway is protein modification; protein glycosylation. Catalyzes alpha(1-&gt;3) linkage of fucosyl moiety transferred from GDP-beta-L-fucose to N-acetyl glucosamine (GlcNAc) within type 2 lactosamine (LacNAc, Gal-beta(1-&gt;4)GlcNAc) glycan attached to N- or O-linked glycoproteins. Robustly fucosylates nonsialylated distal LacNAc unit of the polylactosamine chain to form Lewis X antigen (CD15), a glycan determinant known to mediate important cellular functions in development and immunity. Fucosylates with lower efficiency sialylated LacNAc acceptors to form sialyl Lewis X and 6-sulfo sialyl Lewis X determinants that serve as recognition epitopes for C-type lectins. Together with FUT7 contributes to SELE, SELL and SELP selectin ligand biosynthesis and selectin-dependent lymphocyte homing, leukocyte migration and blood leukocyte homeostasis. In a cell type specific manner, may also fucosylate the internal LacNAc unit of the polylactosamine chain to form VIM-2 antigen that serves as recognition epitope for SELE. The protein is Alpha-(1,3)-fucosyltransferase 4 (FUT4) of Pan troglodytes (Chimpanzee).